Here is a 319-residue protein sequence, read N- to C-terminus: ATP-dependent 6-phosphofructokinase (319 aa).

Gly-11 contacts ATP. 21–25 provides a ligand contact to ADP; the sequence is RAVVR. ATP-binding positions include 72-73 and 102-105; these read RC and GDGS. A Mg(2+)-binding site is contributed by Asp-103. Residue 125–127 coordinates substrate; sequence TID. Asp-127 functions as the Proton acceptor in the catalytic mechanism. Arg-154 contacts ADP. Substrate-binding positions include Arg-162 and 169–171; that span reads MGR. ADP-binding positions include 185-187, Arg-211, and 213-215; these read GAE and KKH. Substrate is bound by residues Glu-222, Arg-243, and 249-252; that span reads HVQR.

It belongs to the phosphofructokinase type A (PFKA) family. ATP-dependent PFK group I subfamily. Prokaryotic clade 'B1' sub-subfamily. Homotetramer. Mg(2+) serves as cofactor.

Its subcellular location is the cytoplasm. It carries out the reaction beta-D-fructose 6-phosphate + ATP = beta-D-fructose 1,6-bisphosphate + ADP + H(+). The protein operates within carbohydrate degradation; glycolysis; D-glyceraldehyde 3-phosphate and glycerone phosphate from D-glucose: step 3/4. With respect to regulation, allosterically activated by ADP and other diphosphonucleosides, and allosterically inhibited by phosphoenolpyruvate. In terms of biological role, catalyzes the phosphorylation of D-fructose 6-phosphate to fructose 1,6-bisphosphate by ATP, the first committing step of glycolysis. This is ATP-dependent 6-phosphofructokinase from Bacillus cereus (strain B4264).